We begin with the raw amino-acid sequence, 591 residues long: Monoterpene synthase 8, chloroplastic (591 aa).

The transit peptide at Met-1–Ser-46 directs the protein to the chloroplast. Positions 346, 350, and 497 each coordinate Mg(2+). The DDXXD motif motif lies at Asp-346–Asp-350.

Belongs to the terpene synthase family. Tpsa subfamily. Requires Mg(2+) as cofactor. It depends on Mn(2+) as a cofactor. In terms of tissue distribution, highly expressed in flowers, petals and sepals, but almost undetectable in vegetative organs.

The protein localises to the plastid. The protein resides in the chloroplast. It carries out the reaction (2E)-geranyl diphosphate + H2O = (R)-linalool + diphosphate. The catalysed reaction is (2E)-geranyl diphosphate + H2O = (S)-linalool + diphosphate. It catalyses the reaction (2E,6E)-farnesyl diphosphate = (S)-beta-bisabolene + diphosphate. The enzyme catalyses (2E,6E)-farnesyl diphosphate = (E,R)-alpha-bisabolene + diphosphate. It carries out the reaction (2E,6E)-farnesyl diphosphate = (E)-beta-farnesene + diphosphate. The catalysed reaction is (2E,6E)-farnesyl diphosphate = beta-sesquiphellandrene + diphosphate. It catalyses the reaction (2E,6E)-farnesyl diphosphate = (1S,5S,6R)-alpha-bergamotene + diphosphate. It functions in the pathway secondary metabolite biosynthesis; terpenoid biosynthesis. Its function is as follows. Sesquiterpene and monoterpene synthase involved in the biosynthesis of volatile compounds present in floral scent. Mediates the conversion of (2E)-geranyl diphosphate (GPP) into linalool, with trace levels of myrcene, limonene and (Z)-beta-ocimene. Also acts as a sesquiterpene synthase by catalyzing the conversion of farnesyl diphosphate (FPP) to alpha-bergamotene and beta-bisabolene and to minor products including alpha-curcumene, cis-alpha-bisabolene, beta-farnesene and beta-sesquiphellandrene, as well as seven other unidentified sesquiterpenes. The protein is Monoterpene synthase 8, chloroplastic of Hedychium coronarium (White butterfly ginger-lily).